We begin with the raw amino-acid sequence, 310 residues long: Ribosomal RNA small subunit methyltransferase H (310 aa).

S-adenosyl-L-methionine contacts are provided by residues 33 to 35 (AGH), D53, F79, D100, and Q107.

This sequence belongs to the methyltransferase superfamily. RsmH family.

The protein resides in the cytoplasm. It catalyses the reaction cytidine(1402) in 16S rRNA + S-adenosyl-L-methionine = N(4)-methylcytidine(1402) in 16S rRNA + S-adenosyl-L-homocysteine + H(+). Specifically methylates the N4 position of cytidine in position 1402 (C1402) of 16S rRNA. The polypeptide is Ribosomal RNA small subunit methyltransferase H (Desulfitobacterium hafniense (strain DSM 10664 / DCB-2)).